Consider the following 438-residue polypeptide: MYLIADWRRTHYSKDVIPEMDGQEVTLMGWVHSIRALGKLAFVILRDRAGTIQAVVPKQKVDEETFEIAKKLGKEDIVAIKGKVVANEKAPKGFEVIPIEIRVLNKADAPLPLDPSEKVSAEIDTRLDKRFLDIRRPKIQAIFKIRSEMLKSIRKTFADEGFIEVNTPKLVASATEGGTELFPISYFEKEAFLGQSPQLYKQMMMAGGFDKVFEIAQIFRAEEHNTRRHLNEAISIDSEMSFVNEKDAMAMLEKVVYNCYSDIEYNRPNEIELLELNWEIPEKTFDKVTYTEAIDIAIAKGVEIEWGEDLSRAAERAVGDEMGGLYFITEWPTQTRPFYTLPHKHDNKVCKAFDLMYKELEISSGAQRVHKYDLLVQNISNMGLNPDSFETYLEAFKYGMPPHAGWGLGADRFAMVLTAQDNIRECVLFPRDRQRLTP.

Glu-176 is an L-aspartate binding site. Residues 198–201 (QLYK) are aspartate. Arg-220 contributes to the L-aspartate binding site. ATP is bound by residues 220 to 222 (RAE), 228 to 230 (RHL), and Glu-361. Glu-361 and Ser-364 together coordinate Mg(2+). L-aspartate is bound by residues Ser-364 and Arg-368. Position 409-412 (409-412 (GADR)) interacts with ATP.

It belongs to the class-II aminoacyl-tRNA synthetase family. Type 2 subfamily. In terms of assembly, homodimer. It depends on Mg(2+) as a cofactor.

It is found in the cytoplasm. The enzyme catalyses tRNA(Asx) + L-aspartate + ATP = L-aspartyl-tRNA(Asx) + AMP + diphosphate. Functionally, aspartyl-tRNA synthetase with relaxed tRNA specificity since it is able to aspartylate not only its cognate tRNA(Asp) but also tRNA(Asn). Reaction proceeds in two steps: L-aspartate is first activated by ATP to form Asp-AMP and then transferred to the acceptor end of tRNA(Asp/Asn). The chain is Aspartate--tRNA(Asp/Asn) ligase from Methanococcus maripaludis (strain DSM 14266 / JCM 13030 / NBRC 101832 / S2 / LL).